We begin with the raw amino-acid sequence, 263 residues long: Hemin import ATP-binding protein HmuV (263 aa).

The ABC transporter domain occupies 2–242 (IEARDVSVDI…DLIEKVFDCR (241 aa)). 34–41 (GPNGSGKT) contacts ATP.

It belongs to the ABC transporter superfamily. Heme (hemin) importer (TC 3.A.1.14.5) family. The complex is composed of two ATP-binding proteins (HmuV), two transmembrane proteins (HmuU) and a solute-binding protein (HmuT).

It localises to the cell inner membrane. Part of the ABC transporter complex HmuTUV involved in hemin import. Responsible for energy coupling to the transport system. This Mesorhizobium japonicum (strain LMG 29417 / CECT 9101 / MAFF 303099) (Mesorhizobium loti (strain MAFF 303099)) protein is Hemin import ATP-binding protein HmuV.